Reading from the N-terminus, the 54-residue chain is UPF0391 membrane protein Oant_1245 (54 aa).

The next 2 membrane-spanning stretches (helical) occupy residues 5–25 and 29–48; these read ALVF…GIAG and GIAQ…SLIA.

This sequence belongs to the UPF0391 family.

The protein localises to the cell membrane. This chain is UPF0391 membrane protein Oant_1245, found in Brucella anthropi (strain ATCC 49188 / DSM 6882 / CCUG 24695 / JCM 21032 / LMG 3331 / NBRC 15819 / NCTC 12168 / Alc 37) (Ochrobactrum anthropi).